We begin with the raw amino-acid sequence, 344 residues long: Anthranilate phosphoribosyltransferase (344 aa).

5-phospho-alpha-D-ribose 1-diphosphate-binding positions include Gly-86, 89 to 90 (GD), Thr-94, 96 to 99 (NIST), 114 to 122 (KHGNKSASG), and Ser-126. Position 86 (Gly-86) interacts with anthranilate. Ser-98 provides a ligand contact to Mg(2+). Asn-117 contacts anthranilate. Arg-172 contributes to the anthranilate binding site. Mg(2+) contacts are provided by Asp-231 and Glu-232.

It belongs to the anthranilate phosphoribosyltransferase family. Homodimer. Mg(2+) is required as a cofactor.

The enzyme catalyses N-(5-phospho-beta-D-ribosyl)anthranilate + diphosphate = 5-phospho-alpha-D-ribose 1-diphosphate + anthranilate. It participates in amino-acid biosynthesis; L-tryptophan biosynthesis; L-tryptophan from chorismate: step 2/5. Functionally, catalyzes the transfer of the phosphoribosyl group of 5-phosphorylribose-1-pyrophosphate (PRPP) to anthranilate to yield N-(5'-phosphoribosyl)-anthranilate (PRA). The protein is Anthranilate phosphoribosyltransferase of Prochlorococcus marinus (strain MIT 9215).